The following is a 114-amino-acid chain: Cystatin Pr17a (114 aa).

The N-terminal stretch at 1–18 is a signal peptide; the sequence is MSCLKIITLFLFLAAVIA. Residues 31–109 form the Cystatin domain; the sequence is GAPEQINPND…QAWLKKTSVK (79 aa). A disulfide bridge links cysteine 93 with cysteine 113.

The protein belongs to the cystatin family. In terms of tissue distribution, expressed by the venom gland (posterior main gland) (at protein level).

The protein localises to the secreted. The sequence is that of Cystatin Pr17a from Platymeris rhadamanthus (Red spot assassin bug).